Reading from the N-terminus, the 504-residue chain is ATP synthase subunit alpha (504 aa).

An ATP-binding site is contributed by 169-176 (GDRQTGKT).

The protein belongs to the ATPase alpha/beta chains family. As to quaternary structure, F-type ATPases have 2 components, CF(1) - the catalytic core - and CF(0) - the membrane proton channel. CF(1) has five subunits: alpha(3), beta(3), gamma(1), delta(1), epsilon(1). CF(0) has three main subunits: a(1), b(2) and c(9-12). The alpha and beta chains form an alternating ring which encloses part of the gamma chain. CF(1) is attached to CF(0) by a central stalk formed by the gamma and epsilon chains, while a peripheral stalk is formed by the delta and b chains.

Its subcellular location is the cell membrane. It carries out the reaction ATP + H2O + 4 H(+)(in) = ADP + phosphate + 5 H(+)(out). Its function is as follows. Produces ATP from ADP in the presence of a proton gradient across the membrane. The alpha chain is a regulatory subunit. This Clostridium botulinum (strain Langeland / NCTC 10281 / Type F) protein is ATP synthase subunit alpha.